The sequence spans 344 residues: RNA 3'-terminal phosphate cyclase (344 aa).

ATP contacts are provided by residues glutamine 103 and 283 to 287; that span reads HLADQ. Catalysis depends on histidine 308, which acts as the Tele-AMP-histidine intermediate.

This sequence belongs to the RNA 3'-terminal cyclase family. Type 1 subfamily.

The protein resides in the cytoplasm. The catalysed reaction is a 3'-end 3'-phospho-ribonucleotide-RNA + ATP = a 3'-end 2',3'-cyclophospho-ribonucleotide-RNA + AMP + diphosphate. Its function is as follows. Catalyzes the conversion of 3'-phosphate to a 2',3'-cyclic phosphodiester at the end of RNA. The mechanism of action of the enzyme occurs in 3 steps: (A) adenylation of the enzyme by ATP; (B) transfer of adenylate to an RNA-N3'P to produce RNA-N3'PP5'A; (C) and attack of the adjacent 2'-hydroxyl on the 3'-phosphorus in the diester linkage to produce the cyclic end product. The biological role of this enzyme is unknown but it is likely to function in some aspects of cellular RNA processing. The chain is RNA 3'-terminal phosphate cyclase from Salmonella paratyphi C (strain RKS4594).